The following is a 610-amino-acid chain: Ectonucleoside triphosphate diphosphohydrolase 7 (610 aa).

At Met1–Arg28 the chain is on the cytoplasmic side. The chain crosses the membrane as a helical span at residues Val29–Leu49. The Vesicular portion of the chain corresponds to Gln50–Tyr555. Glu217 (proton acceptor) is an active-site residue. N-linked (GlcNAc...) asparagine glycans are attached at residues Asn336 and Asn400. A disulfide bond links Cys454 and Cys483. Residues Asn556–Leu576 form a helical membrane-spanning segment. Residues Arg577 to Thr610 are Cytoplasmic-facing.

The protein belongs to the GDA1/CD39 NTPase family. Ca(2+) serves as cofactor. Requires Mg(2+) as cofactor.

It is found in the cytoplasmic vesicle membrane. The catalysed reaction is a ribonucleoside 5'-triphosphate + H2O = a ribonucleoside 5'-diphosphate + phosphate + H(+). The enzyme catalyses UTP + H2O = UDP + phosphate + H(+). It catalyses the reaction GTP + H2O = GDP + phosphate + H(+). It carries out the reaction CTP + H2O = CDP + phosphate + H(+). Catalyzes the hydrolysis of nucleoside triphosphates and diphosphates in a calcium- or magnesium-dependent manner. Preferentially hydrolyzes nucleoside 5'-triphosphates, with substrate preference for UTP &gt; GTP &gt; CTP. Hydrolyzes ATP and nucleoside diphosphates only to a minor extent. This Xenopus tropicalis (Western clawed frog) protein is Ectonucleoside triphosphate diphosphohydrolase 7 (entpd7).